Reading from the N-terminus, the 332-residue chain is Cysteine and histidine-rich domain-containing protein 1 (332 aa).

Ala2 carries the post-translational modification N-acetylalanine. Positions 2 to 77 (ALLCYNRGCG…KPPEPVKPEV (76 aa)) are interaction with PPP5C. Positions 5, 10, 24, 27, 42, and 43 each coordinate Zn(2+). CHORD domains follow at residues 5 to 64 (CYNR…KGRH) and 157 to 216 (CKNG…TGKH). Position 47 is a phosphothreonine (Thr47). A Phosphoserine modification is found at Ser51. Positions 59, 64, 157, 162, 176, 179, 194, 195, 211, and 216 each coordinate Zn(2+). The disordered stretch occupies residues 61 to 82 (KGRHNSEKPPEPVKPEVKTTEK). Basic and acidic residues predominate over residues 64–82 (HNSEKPPEPVKPEVKTTEK). Residues 65–316 (NSEKPPEPVK…AEPMQWASLE (252 aa)) are interaction with HSP90AA1 and HSP90AB1. Positions 227–316 (VVPCRHDWHQ…AEPMQWASLE (90 aa)) constitute a CS domain.

In terms of assembly, interacts with HSP90AA1, HSP90AB1, PPP5C, ROCK1 and ROCK2.

In terms of biological role, regulates centrosome duplication, probably by inhibiting the kinase activity of ROCK2. Proposed to act as co-chaperone for HSP90. May play a role in the regulation of NOD1 via a HSP90 chaperone complex. In vitro, has intrinsic chaperone activity. This function may be achieved by inhibiting association of ROCK2 with NPM1. Plays a role in ensuring the localization of the tyrosine kinase receptor EGFR to the plasma membrane, and thus ensures the subsequent regulation of EGFR activity and EGF-induced actin cytoskeleton remodeling. Involved in stress response. Prevents tumorigenesis. The polypeptide is Cysteine and histidine-rich domain-containing protein 1 (CHORDC1) (Sus scrofa (Pig)).